Reading from the N-terminus, the 206-residue chain is uncharacterized protein (206 aa).

A helical transmembrane segment spans residues 4 to 24 (LLVVIAVALFIAAIVVLVVAI).

The protein resides in the membrane. This is an uncharacterized protein from Mycobacterium tuberculosis (strain CDC 1551 / Oshkosh).